The primary structure comprises 57 residues: UPF0391 membrane protein RPE_2138 (57 aa).

2 helical membrane passes run 4 to 24 (WVVTFLVVALIAGILGFGGIA) and 30 to 50 (IAKIIFFIAVVLFLVSAVIGL).

This sequence belongs to the UPF0391 family.

The protein resides in the cell membrane. The chain is UPF0391 membrane protein RPE_2138 from Rhodopseudomonas palustris (strain BisA53).